Consider the following 462-residue polypeptide: tRNA modification GTPase MnmE (462 aa).

(6S)-5-formyl-5,6,7,8-tetrahydrofolate contacts are provided by arginine 23, glutamate 86, and lysine 125. The region spanning glycine 221–asparagine 384 is the TrmE-type G domain. Residue asparagine 231 coordinates K(+). GTP contacts are provided by residues asparagine 231–threonine 236, serine 250–threonine 256, and aspartate 275–glycine 278. Serine 235 contacts Mg(2+). Serine 250, isoleucine 252, and threonine 255 together coordinate K(+). Threonine 256 lines the Mg(2+) pocket. Position 462 (lysine 462) interacts with (6S)-5-formyl-5,6,7,8-tetrahydrofolate.

The protein belongs to the TRAFAC class TrmE-Era-EngA-EngB-Septin-like GTPase superfamily. TrmE GTPase family. As to quaternary structure, homodimer. Heterotetramer of two MnmE and two MnmG subunits. It depends on K(+) as a cofactor.

It is found in the cytoplasm. Exhibits a very high intrinsic GTPase hydrolysis rate. Involved in the addition of a carboxymethylaminomethyl (cmnm) group at the wobble position (U34) of certain tRNAs, forming tRNA-cmnm(5)s(2)U34. This Flavobacterium psychrophilum (strain ATCC 49511 / DSM 21280 / CIP 103535 / JIP02/86) protein is tRNA modification GTPase MnmE.